We begin with the raw amino-acid sequence, 778 residues long: Molybdenum cofactor sulfurase (778 aa).

Lys-235 is modified (N6-(pyridoxal phosphate)lysine). Residue Cys-399 is part of the active site. Disordered stretches follow at residues Leu-576–Cys-596 and Ala-654–Lys-673. Over residues Arg-584–Arg-594 the composition is skewed to low complexity. In terms of domain architecture, MOSC spans Leu-651–Leu-778.

It belongs to the class-V pyridoxal-phosphate-dependent aminotransferase family. MOCOS subfamily. Requires pyridoxal 5'-phosphate as cofactor.

The catalysed reaction is Mo-molybdopterin + L-cysteine + AH2 = thio-Mo-molybdopterin + L-alanine + A + H2O. It participates in cofactor biosynthesis; molybdopterin biosynthesis. Functionally, sulfurates the molybdenum cofactor. Sulfation of molybdenum is essential for xanthine dehydrogenase (XDH) and aldehyde oxidase (ADO) enzymes in which molybdenum cofactor is liganded by 1 oxygen and 1 sulfur atom in active form. The polypeptide is Molybdenum cofactor sulfurase (Chaetomium globosum (strain ATCC 6205 / CBS 148.51 / DSM 1962 / NBRC 6347 / NRRL 1970) (Soil fungus)).